A 526-amino-acid chain; its full sequence is Peptide chain release factor 3 (526 aa).

One can recognise a tr-type G domain in the interval 11-277 (SKRRTFAIIS…SLIKWAPSPL (267 aa)). GTP is bound by residues 20–27 (SHPDAGKT), 88–92 (DTPGH), and 142–145 (NKLD).

The protein belongs to the TRAFAC class translation factor GTPase superfamily. Classic translation factor GTPase family. PrfC subfamily.

Its subcellular location is the cytoplasm. Its function is as follows. Increases the formation of ribosomal termination complexes and stimulates activities of RF-1 and RF-2. It binds guanine nucleotides and has strong preference for UGA stop codons. It may interact directly with the ribosome. The stimulation of RF-1 and RF-2 is significantly reduced by GTP and GDP, but not by GMP. The protein is Peptide chain release factor 3 of Buchnera aphidicola subsp. Acyrthosiphon pisum (strain 5A).